Here is a 148-residue protein sequence, read N- to C-terminus: Large ribosomal subunit protein bL9 (148 aa).

It belongs to the bacterial ribosomal protein bL9 family.

In terms of biological role, binds to the 23S rRNA. This Coprothermobacter proteolyticus (strain ATCC 35245 / DSM 5265 / OCM 4 / BT) protein is Large ribosomal subunit protein bL9.